Consider the following 229-residue polypeptide: MATKIFLASPVISATRTPIVPKAIASRLGTSLAAALAATSVLTMVPVLPAAGEGNQTYKIYYGTAASAANYGGYGGNSDRKTSAEYVYDVPEGWKERLVSKVEKGTNGTDSEFYNPKKKTEKEYLTFLAGFRQLAPRDVILNNLALSDVELQDLIAGADKVVSEERKDETGQVYYLYEIDGVGKHSLITVTCSKNRLYAHFVNAPAPEWNRDHDTLTHLRDSFKTVSSS.

Its subcellular location is the plastid. It is found in the chloroplast thylakoid lumen. This chain is Thylakoid lumenal 19 kDa protein, chloroplastic, found in Arabidopsis thaliana (Mouse-ear cress).